Consider the following 214-residue polypeptide: Metalloproteinase inhibitor 3 (214 aa).

The N-terminal stretch at 1-26 (MVFSTTAALSLLLALSSMQLSEVSEA) is a signal peptide. A Zn(2+)-binding site is contributed by C27. Involved in metalloproteinase-binding stretches follow at residues 27–30 (CTCM) and 91–92 (ES). Disulfide bonds link C27-C94, C29-C121, C39-C146, C148-C195, C153-C158, and C166-C187. The NTR domain maps to 27 to 146 (CTCMPNHPQE…GLNHRYQYGC (120 aa)). N-linked (GlcNAc...) asparagine glycosylation is present at N210.

The protein belongs to the protease inhibitor I35 (TIMP) family. In terms of tissue distribution, expressed abundantly in brain and cartilage.

It localises to the secreted. It is found in the extracellular space. The protein resides in the extracellular matrix. Functionally, complexes with metalloproteinases (such as collagenases) and irreversibly inactivates them by binding to their catalytic zinc cofactor. May form part of a tissue-specific acute response to remodeling stimuli. This Scyliorhinus torazame (Cloudy catshark) protein is Metalloproteinase inhibitor 3 (TIMP3).